A 206-amino-acid polypeptide reads, in one-letter code: MAAAKDTHEDHDTSTENADESNHDPQFEPIVSLPEQEIKTLEEDEEELFKMRAKLFRFASENDLPEWKERGTGDVKLLKHKEKGTIRLLMRRDKTLKICANHYITPMMELKPNAGSDRAWVWNTHADFADECPKQELLAIRFLNAENAQKFKTKFEECRKEIEEKEKKGSGKNDSTEKVVEKLEALSVQEGEQPQDAAPAAVEEEQ.

Residues 1–26 (MAAAKDTHEDHDTSTENADESNHDPQ) are compositionally biased toward basic and acidic residues. The tract at residues 1-33 (MAAAKDTHEDHDTSTENADESNHDPQFEPIVSL) is disordered. The residue at position 2 (A2) is an N-acetylalanine. Residue T13 is modified to Phosphothreonine. Phosphoserine occurs at positions 21 and 60. The RanBD1 domain occupies 26–164 (QFEPIVSLPE…FEECRKEIEE (139 aa)). K150 carries the post-translational modification N6-acetyllysine; alternate. Position 150 is an N6-succinyllysine; alternate (K150). The segment covering 162 to 184 (IEEKEKKGSGKNDSTEKVVEKLE) has biased composition (basic and acidic residues). Positions 162 to 206 (IEEKEKKGSGKNDSTEKVVEKLEALSVQEGEQPQDAAPAAVEEEQ) are disordered. K182 carries the post-translational modification N6-acetyllysine. S187 carries the post-translational modification Phosphoserine.

The protein belongs to the RANBP1 family. As to quaternary structure, interacts with RAN (via C-terminus of GTP-bound form) but not with GDP-bound RAN. Identified in a complex composed of RAN, RANGAP1 and RANBP1. Identified in a complex that contains TNPO1, RAN and RANBP1. Identified in a complex that contains CSE1L, KPNA2, RAN and RANBP1. Identified in a complex with nucleotide-free RAN and RCC1.

Plays a role in RAN-dependent nucleocytoplasmic transport. Alleviates the TNPO1-dependent inhibition of RAN GTPase activity and mediates the dissociation of RAN from proteins involved in transport into the nucleus. Induces a conformation change in the complex formed by XPO1 and RAN that triggers the release of the nuclear export signal of cargo proteins. Promotes the disassembly of the complex formed by RAN and importin beta. Promotes dissociation of RAN from a complex with KPNA2 and CSE1L. Required for normal mitotic spindle assembly and normal progress through mitosis via its effect on RAN. Does not increase the RAN GTPase activity by itself, but increases GTP hydrolysis mediated by RANGAP1. Inhibits RCC1-dependent exchange of RAN-bound GDP by GTP. This Bos taurus (Bovine) protein is Ran-specific GTPase-activating protein (RANBP1).